Here is a 544-residue protein sequence, read N- to C-terminus: Chaperonin GroEL (544 aa).

ATP-binding positions include 29–32 (TLGP), 86–90 (DGTTT), glycine 413, 476–478 (NAA), and aspartate 492.

This sequence belongs to the chaperonin (HSP60) family. As to quaternary structure, forms a cylinder of 14 subunits composed of two heptameric rings stacked back-to-back. Interacts with the co-chaperonin GroES.

The protein resides in the cytoplasm. The enzyme catalyses ATP + H2O + a folded polypeptide = ADP + phosphate + an unfolded polypeptide.. Functionally, together with its co-chaperonin GroES, plays an essential role in assisting protein folding. The GroEL-GroES system forms a nano-cage that allows encapsulation of the non-native substrate proteins and provides a physical environment optimized to promote and accelerate protein folding. This chain is Chaperonin GroEL, found in Bacillus thuringiensis (strain Al Hakam).